The following is a 941-amino-acid chain: Cilia- and flagella-associated protein 69 (941 aa).

The protein resides in the cell projection. Its subcellular location is the cilium. The protein localises to the flagellum. Cilium- and flagellum-associated protein. In the olfactory epithelium, regulates the speed of activation and termination of the odor response and thus contributes to the robustness of olfactory transduction pathways. Required for sperm flagellum assembly and stability. This is Cilia- and flagella-associated protein 69 from Callithrix jacchus (White-tufted-ear marmoset).